The sequence spans 306 residues: Beta-lactamase (306 aa).

The signal sequence occupies residues 1–34; the sequence is MNVKRKATLKFGICIGLLCVSFTGFNSLFGSTHA. The active-site Acyl-ester intermediate is the Ser-89. 251-253 contributes to the substrate binding site; that stretch reads KSG.

It belongs to the class-A beta-lactamase family.

It catalyses the reaction a beta-lactam + H2O = a substituted beta-amino acid. This protein is a beta-lactamase with a substrate specificity for penicillins. This Bacillus amyloliquefaciens (Bacillus velezensis) protein is Beta-lactamase (penP).